The sequence spans 245 residues: 8-amino-3,8-dideoxy-manno-octulosonate cytidylyltransferase (245 aa).

The protein belongs to the KdsB family.

Its subcellular location is the cytoplasm. It carries out the reaction 8-amino-3,8-dideoxy-alpha-D-manno-octulosonate + CTP = CMP-8-amino-3,8-dideoxy-alpha-D-manno-oct-2-ulosonate + diphosphate. The protein operates within bacterial outer membrane biogenesis; lipopolysaccharide biosynthesis. Its function is as follows. Activates KDO8N (a required 8-carbon sugar) for incorporation into bacterial lipopolysaccharide in the Shewanella genus. The chain is 8-amino-3,8-dideoxy-manno-octulosonate cytidylyltransferase from Shewanella sp. (strain W3-18-1).